A 341-amino-acid polypeptide reads, in one-letter code: Putative ankyrin repeat protein FPV031 (341 aa).

ANK repeat units follow at residues 23–55 (DRNS…FQET), 58–87 (DNLT…IINQ), 92–124 (CGNT…ITNN), 125–158 (DGFT…IRDN), and 163–195 (TGLT…YSTC).

The sequence is that of Putative ankyrin repeat protein FPV031 (ANK3) from Fowlpox virus (strain NVSL) (FPV).